The sequence spans 1121 residues: Peroxisomal ATPase PEX1 (1121 aa).

Disordered stretches follow at residues 187–221 and 1099–1121; these read SISSVRSDSSGHRIRRVRSSTSTATGRRSVTNNGE and SGRDGNMPDGTASNEIGARSTLM. Residues 205–217 show a composition bias toward low complexity; that stretch reads SSTSTATGRRSVT.

This sequence belongs to the AAA ATPase family. As to quaternary structure, interacts with PEX6; forming the PEX1-PEX6 AAA ATPase complex, which is composed of a heterohexamer formed by a trimer of PEX1-PEX6 dimers.

It localises to the membrane. The catalysed reaction is ATP + H2O = ADP + phosphate + H(+). Its function is as follows. Component of the PEX1-PEX6 AAA ATPase complex involved in peroxisome biosynthesis. The complex acts as a protein dislocase complex that mediates the ATP-dependent extraction of the PEX5 receptor from peroxisomal membranes, an essential step for PEX5 recycling. Specifically recognizes PEX5 monoubiquitinated at 'Cys-6', and pulls it out of the peroxisome lumen through the PEX2-PEX10-PEX12 retrotranslocation channel. Extraction by the PEX1-PEX6 AAA ATPase complex is accompanied by unfolding of the TPR repeats and release of bound cargo from PEX5. The chain is Peroxisomal ATPase PEX1 from Komagataella phaffii (strain GS115 / ATCC 20864) (Yeast).